A 20-amino-acid polypeptide reads, in one-letter code: Alkaline phosphatase (20 aa).

The tract at residues 1–20 is disordered; it reads TDMLAVSVSSTDAIGHKYGT.

As to quaternary structure, homodimer; may be disulfide-linked. In terms of processing, the N-terminus is blocked.

The enzyme catalyses a phosphate monoester + H2O = an alcohol + phosphate. Completely inhibited by thiol-reducing agents, such as DTT and 2-mercaptoethanol. Activity was also inhibited by sodium orthovanadate, sodium molybdate, N-ethylmaleimide, EDTA and zinc ion, but was not inhibited by okadaic acid. Its function is as follows. Acts against tyrosine-phosphatases. In Prevotella intermedia, this protein is Alkaline phosphatase.